Reading from the N-terminus, the 614-residue chain is RNA polymerase sigma factor RpoD (614 aa).

The tract at residues 178-222 is disordered; sequence THIGSDLSQSERDKDDSKDDSKDDDEDEEEEGPKGPDPEESKERF. Over residues 186 to 198 the composition is skewed to basic and acidic residues; it reads QSERDKDDSKDDS. Acidic residues predominate over residues 199–208; that stretch reads KDDDEDEEEE. Positions 209 to 222 are enriched in basic and acidic residues; it reads GPKGPDPEESKERF. The segment at 380–450 is sigma-70 factor domain-2; that stretch reads MVEANLRLVI…TRSIADQART (71 aa). Residues 404 to 407 carry the Interaction with polymerase core subunit RpoC motif; sequence DLIQ. The tract at residues 459–535 is sigma-70 factor domain-3; that stretch reads ETINKLNRIS…DTTLELPLDS (77 aa). The interval 548–601 is sigma-70 factor domain-4; that stretch reads VLAGLTAREAKVLRMRFGIDMNTDHTLEEVGKQFDVTRERIRQIEAKALRKLRH. Positions 574-593 form a DNA-binding region, H-T-H motif; it reads LEEVGKQFDVTRERIRQIEA.

The protein belongs to the sigma-70 factor family. RpoD/SigA subfamily. As to quaternary structure, interacts transiently with the RNA polymerase catalytic core.

It is found in the cytoplasm. In terms of biological role, sigma factors are initiation factors that promote the attachment of RNA polymerase to specific initiation sites and are then released. This sigma factor is the primary sigma factor during exponential growth. This chain is RNA polymerase sigma factor RpoD, found in Shewanella violacea (strain JCM 10179 / CIP 106290 / LMG 19151 / DSS12).